A 722-amino-acid chain; its full sequence is Bifunctional UDP-N-acetylglucosamine 2-epimerase/N-acetylmannosamine kinase (722 aa).

Arg-19, Ser-23, Arg-113, His-220, and Asn-253 together coordinate UDP. Positions 259, 271, 280, and 281 each coordinate CMP-N-acetyl-beta-neuraminate. Positions 282, 301, 302, 307, and 321 each coordinate UDP. An N-acetylmannosamine kinase region spans residues 406-722; sequence TLSALAVDLG…VLDYTTRRIH (317 aa). Asp-413 serves as a coordination point for Mg(2+). Gly-416 contributes to the an N-acyl-D-mannosamine 6-phosphate binding site. Positions 417, 418, and 420 each coordinate ADP. Residues Gly-476, Arg-477, Thr-489, Asn-516, Asp-517, and Gly-545 each contribute to the an N-acyl-D-mannosamine 6-phosphate site. An N-acyl-D-mannosamine-binding residues include Gly-476, Arg-477, Thr-489, Asn-516, and Asp-517. Residue Asp-517 is part of the active site. Positions 566 and 569 each coordinate an N-acyl-D-mannosamine. Position 569 (His-569) interacts with an N-acyl-D-mannosamine 6-phosphate. Zn(2+) contacts are provided by His-569, Cys-579, Cys-581, and Cys-586. Glu-588 contributes to the an N-acyl-D-mannosamine 6-phosphate binding site. Residue Glu-588 coordinates an N-acyl-D-mannosamine.

The protein in the N-terminal section; belongs to the UDP-N-acetylglucosamine 2-epimerase family. It in the C-terminal section; belongs to the ROK (NagC/XylR) family. As to quaternary structure, homodimer. Homotetramer. Homohexamer. The hexameric form exhibits both enzyme activities, whereas the dimeric form only catalyzes the phosphorylation of N-acyl-D-mannosamine. In terms of processing, phosphorylated. Phosphorylation by PKC activates the UDP-N-acetylglucosamine 2-epimerase activity. Widely expressed. Highest expression in liver. Also found at high levels in lung, brain and kidney.

It localises to the cytoplasm. It is found in the cytosol. It catalyses the reaction UDP-N-acetyl-alpha-D-glucosamine + H2O = aldehydo-N-acetyl-D-mannosamine + UDP + H(+). It carries out the reaction an N-acyl-D-mannosamine + ATP = an N-acyl-D-mannosamine 6-phosphate + ADP + H(+). It participates in amino-sugar metabolism; N-acetylneuraminate biosynthesis. With respect to regulation, the UDP-N-acetylglucosamine 2-epimerase activity, in contrast to the N-acetylmannosamine kinase activity, exhibits allosteric regulation by cytidine monophosphate-N-acetylneuraminic acid (CMP-Neu5Ac), the end product of neuraminic acid biosynthesis. Moreover, the activity is contingent upon the oligomeric state of the enzyme. The monomeric form is inactive, while the dimeric form selectively catalyzes the phosphorylation of N-acetylmannosamine. The hexameric form, on the other hand, demonstrates full proficiency in both enzyme activities. Furthermore, the UDP-N-acetylglucosamine 2-epimerase activity is increased by PKC-mediated phosphorylation. Its function is as follows. Bifunctional enzyme that possesses both UDP-N-acetylglucosamine 2-epimerase and N-acetylmannosamine kinase activities, and serves as the initiator of the biosynthetic pathway leading to the production of N-acetylneuraminic acid (NeuAc), a critical precursor in the synthesis of sialic acids. By catalyzing this pivotal and rate-limiting step in sialic acid biosynthesis, this enzyme assumes a pivotal role in governing the regulation of cell surface sialylation, playing a role in embryonic angiogenesis. Sialic acids represent a category of negatively charged sugars that reside on the surface of cells as terminal components of glycoconjugates and mediate important functions in various cellular processes, including cell adhesion, signal transduction, and cellular recognition. The polypeptide is Bifunctional UDP-N-acetylglucosamine 2-epimerase/N-acetylmannosamine kinase (Mus musculus (Mouse)).